A 70-amino-acid polypeptide reads, in one-letter code: ATP synthase subunit c (70 aa).

2 helical membrane-spanning segments follow: residues isoleucine 4–isoleucine 24 and phenylalanine 47–valine 67.

The protein belongs to the ATPase C chain family. F-type ATPases have 2 components, F(1) - the catalytic core - and F(0) - the membrane proton channel. F(1) has five subunits: alpha(3), beta(3), gamma(1), delta(1), epsilon(1). F(0) has three main subunits: a(1), b(2) and c(10-14). The alpha and beta chains form an alternating ring which encloses part of the gamma chain. F(1) is attached to F(0) by a central stalk formed by the gamma and epsilon chains, while a peripheral stalk is formed by the delta and b chains.

The protein resides in the cell membrane. In terms of biological role, f(1)F(0) ATP synthase produces ATP from ADP in the presence of a proton or sodium gradient. F-type ATPases consist of two structural domains, F(1) containing the extramembraneous catalytic core and F(0) containing the membrane proton channel, linked together by a central stalk and a peripheral stalk. During catalysis, ATP synthesis in the catalytic domain of F(1) is coupled via a rotary mechanism of the central stalk subunits to proton translocation. Key component of the F(0) channel; it plays a direct role in translocation across the membrane. A homomeric c-ring of between 10-14 subunits forms the central stalk rotor element with the F(1) delta and epsilon subunits. The protein is ATP synthase subunit c of Staphylococcus carnosus (strain TM300).